The chain runs to 232 residues: Large ribosomal subunit protein uL1 (232 aa).

Belongs to the universal ribosomal protein uL1 family. Part of the 50S ribosomal subunit.

Binds directly to 23S rRNA. The L1 stalk is quite mobile in the ribosome, and is involved in E site tRNA release. Its function is as follows. Protein L1 is also a translational repressor protein, it controls the translation of the L11 operon by binding to its mRNA. The sequence is that of Large ribosomal subunit protein uL1 from Alkaliphilus metalliredigens (strain QYMF).